The chain runs to 57 residues: MNAQESRYEKARKLGARALQLAHGAPVLIETEHTQPILIAAEEYDAGVLPFTVNRSD.

This sequence belongs to the archaeal Rpo6/eukaryotic RPB6 RNA polymerase subunit family. In terms of assembly, part of the RNA polymerase complex.

The protein localises to the cytoplasm. It catalyses the reaction RNA(n) + a ribonucleoside 5'-triphosphate = RNA(n+1) + diphosphate. DNA-dependent RNA polymerase (RNAP) catalyzes the transcription of DNA into RNA using the four ribonucleoside triphosphates as substrates. This is DNA-directed RNA polymerase subunit Rpo6 from Haloarcula marismortui (strain ATCC 43049 / DSM 3752 / JCM 8966 / VKM B-1809) (Halobacterium marismortui).